A 560-amino-acid polypeptide reads, in one-letter code: Dihydroxy-acid dehydratase (560 aa).

Cys-50 provides a ligand contact to [2Fe-2S] cluster. Residue Asp-82 participates in Mg(2+) binding. A [2Fe-2S] cluster-binding site is contributed by Cys-123. Residues Asp-124 and Lys-125 each contribute to the Mg(2+) site. Residue Lys-125 is modified to N6-carboxylysine. Cys-195 contacts [2Fe-2S] cluster. A Mg(2+)-binding site is contributed by Glu-446. Ser-472 serves as the catalytic Proton acceptor.

This sequence belongs to the IlvD/Edd family. As to quaternary structure, homodimer. [2Fe-2S] cluster is required as a cofactor. The cofactor is Mg(2+).

The enzyme catalyses (2R)-2,3-dihydroxy-3-methylbutanoate = 3-methyl-2-oxobutanoate + H2O. It carries out the reaction (2R,3R)-2,3-dihydroxy-3-methylpentanoate = (S)-3-methyl-2-oxopentanoate + H2O. Its pathway is amino-acid biosynthesis; L-isoleucine biosynthesis; L-isoleucine from 2-oxobutanoate: step 3/4. It functions in the pathway amino-acid biosynthesis; L-valine biosynthesis; L-valine from pyruvate: step 3/4. Functionally, functions in the biosynthesis of branched-chain amino acids. Catalyzes the dehydration of (2R,3R)-2,3-dihydroxy-3-methylpentanoate (2,3-dihydroxy-3-methylvalerate) into 2-oxo-3-methylpentanoate (2-oxo-3-methylvalerate) and of (2R)-2,3-dihydroxy-3-methylbutanoate (2,3-dihydroxyisovalerate) into 2-oxo-3-methylbutanoate (2-oxoisovalerate), the penultimate precursor to L-isoleucine and L-valine, respectively. This is Dihydroxy-acid dehydratase from Leptothrix cholodnii (strain ATCC 51168 / LMG 8142 / SP-6) (Leptothrix discophora (strain SP-6)).